We begin with the raw amino-acid sequence, 307 residues long: Glycine--tRNA ligase alpha subunit (307 aa).

The protein belongs to the class-II aminoacyl-tRNA synthetase family. As to quaternary structure, tetramer of two alpha and two beta subunits.

Its subcellular location is the cytoplasm. It catalyses the reaction tRNA(Gly) + glycine + ATP = glycyl-tRNA(Gly) + AMP + diphosphate. This is Glycine--tRNA ligase alpha subunit from Xylella fastidiosa (strain M23).